We begin with the raw amino-acid sequence, 382 residues long: Galactokinase (382 aa).

34–37 serves as a coordination point for substrate; sequence EHTD. An ATP-binding site is contributed by 124-130; that stretch reads GAGLSSS. Residues serine 130 and glutamate 162 each contribute to the Mg(2+) site. Catalysis depends on aspartate 174, which acts as the Proton acceptor. Substrate is bound at residue tyrosine 223.

This sequence belongs to the GHMP kinase family. GalK subfamily.

Its subcellular location is the cytoplasm. It carries out the reaction alpha-D-galactose + ATP = alpha-D-galactose 1-phosphate + ADP + H(+). It participates in carbohydrate metabolism; galactose metabolism. Its function is as follows. Catalyzes the transfer of the gamma-phosphate of ATP to D-galactose to form alpha-D-galactose-1-phosphate (Gal-1-P). This is Galactokinase from Shigella boydii serotype 18 (strain CDC 3083-94 / BS512).